The chain runs to 481 residues: Phloretin 4'-O-glucosyltransferase (481 aa).

Catalysis depends on histidine 16, which acts as the Proton acceptor. Position 16 (histidine 16) interacts with an anthocyanidin. Glutamine 354, histidine 369, tryptophan 372, asparagine 373, serine 374, glutamate 377, aspartate 393, and glutamine 394 together coordinate UDP-alpha-D-glucose.

This sequence belongs to the UDP-glycosyltransferase family. As to expression, highly expressed in young leaves, at intermediate level in mature leaves and at low levels in flowers and fruits.

The enzyme catalyses phloretin + UDP-alpha-D-glucose = trilobatin + UDP + H(+). It catalyses the reaction (2S)-naringenin + UDP-alpha-D-glucose = (2S)-naringenin 7-O-beta-D-glucoside + UDP + H(+). Its function is as follows. Glycosyltransferase that possesses phloretin 4'-O-glycosyltransferase activity. Converts phloretin to trilobatin (phloretin 4'-O-glucoside), a potential antioxidant. Can convert with low efficiency phlorizin and trilobatin to their corresponding di-O-glucosides. Can convert with low efficiency naringenin to naringenin-7-O-glucoside. Can convert with low efficiency quercetin to quercetin-7-O-glucoside. The sequence is that of Phloretin 4'-O-glucosyltransferase from Malus domestica (Apple).